A 324-amino-acid chain; its full sequence is Delta-aminolevulinic acid dehydratase (324 aa).

Residues C118, C120, and C128 each coordinate Zn(2+). K195 (schiff-base intermediate with substrate) is an active-site residue. 5-aminolevulinate is bound by residues R205 and R217. E233 is a Mg(2+) binding site. Residue K248 is the Schiff-base intermediate with substrate of the active site. 5-aminolevulinate-binding residues include S274 and Y313.

It belongs to the ALAD family. As to quaternary structure, homooctamer. Zn(2+) is required as a cofactor.

The catalysed reaction is 2 5-aminolevulinate = porphobilinogen + 2 H2O + H(+). It functions in the pathway porphyrin-containing compound metabolism; protoporphyrin-IX biosynthesis; coproporphyrinogen-III from 5-aminolevulinate: step 1/4. Catalyzes an early step in the biosynthesis of tetrapyrroles. Binds two molecules of 5-aminolevulinate per subunit, each at a distinct site, and catalyzes their condensation to form porphobilinogen. This is Delta-aminolevulinic acid dehydratase (hemB) from Staphylococcus aureus (strain NCTC 8325 / PS 47).